A 137-amino-acid polypeptide reads, in one-letter code: Drosulfakinins (137 aa).

The N-terminal stretch at 1–31 (MGLRSCTHFATLVIPLWALAFCFLVVVPVPA) is a signal peptide. Residues 32-74 (QTNLQTSKGDRRLQDLESNMGAESDQPNANLVRPSLSRFGDKR) constitute a propeptide that is removed on maturation. Residue F81 is modified to Phenylalanine amide. The propeptide occupies 85–107 (VPRPMIPIELDLLMDNDDENTKA). Y113 bears the Sulfotyrosine mark. Position 118 is a phenylalanine amide (F118). A Sulfotyrosine modification is found at Y130. F135 bears the Phenylalanine amide mark.

It belongs to the gastrin/cholecystokinin family.

The protein localises to the secreted. Functionally, drosulfakinin-0 (DSK 0) plays diverse biological roles including regulating gut muscle contraction in adults but not in larvae. This is Drosulfakinins from Drosophila yakuba (Fruit fly).